The sequence spans 379 residues: Succinyl-diaminopimelate desuccinylase (379 aa).

A Zn(2+)-binding site is contributed by H70. D72 is an active-site residue. A Zn(2+)-binding site is contributed by D103. Residue E137 is the Proton acceptor of the active site. Residues E138, E166, and H352 each contribute to the Zn(2+) site.

This sequence belongs to the peptidase M20A family. DapE subfamily. As to quaternary structure, homodimer. The cofactor is Zn(2+). Co(2+) serves as cofactor.

It carries out the reaction N-succinyl-(2S,6S)-2,6-diaminopimelate + H2O = (2S,6S)-2,6-diaminopimelate + succinate. It participates in amino-acid biosynthesis; L-lysine biosynthesis via DAP pathway; LL-2,6-diaminopimelate from (S)-tetrahydrodipicolinate (succinylase route): step 3/3. In terms of biological role, catalyzes the hydrolysis of N-succinyl-L,L-diaminopimelic acid (SDAP), forming succinate and LL-2,6-diaminopimelate (DAP), an intermediate involved in the bacterial biosynthesis of lysine and meso-diaminopimelic acid, an essential component of bacterial cell walls. This chain is Succinyl-diaminopimelate desuccinylase, found in Burkholderia cenocepacia (strain HI2424).